A 424-amino-acid chain; its full sequence is Endoglucanase 1 (424 aa).

The N-terminal stretch at 1 to 18 (MAKFSALCSLALLGLATA) is a signal peptide. 9 disulfide bridges follow: cysteine 35-cysteine 41, cysteine 68-cysteine 90, cysteine 80-cysteine 86, cysteine 156-cysteine 384, cysteine 188-cysteine 211, cysteine 192-cysteine 210, cysteine 231-cysteine 250, cysteine 239-cysteine 244, and cysteine 255-cysteine 331. An N-linked (GlcNAc...) asparagine glycan is attached at asparagine 76. Glutamate 213 serves as the catalytic Nucleophile. The active-site Proton donor is glutamate 218. Residues asparagine 271 and asparagine 385 are each glycosylated (N-linked (GlcNAc...) asparagine).

The protein belongs to the glycosyl hydrolase 7 (cellulase C) family. In terms of assembly, monomer.

Its subcellular location is the secreted. It carries out the reaction Endohydrolysis of (1-&gt;4)-beta-D-glucosidic linkages in cellulose, lichenin and cereal beta-D-glucans.. Functionally, endoglucanase that is involved in the biological conversion of cellulose to glucose. Hydrolyzes internal beta-1,4-glucosidic bonds. The sequence is that of Endoglucanase 1 from Pyricularia oryzae (strain 70-15 / ATCC MYA-4617 / FGSC 8958) (Rice blast fungus).